A 263-amino-acid chain; its full sequence is Pyrrolysine synthase (263 aa).

L-pyrrolysine contacts are provided by leucine 8, valine 57, isoleucine 64, and alanine 107. NAD(+)-binding residues include lysine 155, valine 156, aspartate 175, cysteine 210, proline 228, isoleucine 230, and glutamate 249.

Belongs to the PylD family.

The enzyme catalyses (3R)-3-methyl-D-ornithyl-N(6)-L-lysine + NAD(+) = L-pyrrolysine + NH4(+) + NADH + 2 H(+). Its pathway is amino-acid biosynthesis; L-pyrrolysine biosynthesis. In terms of biological role, catalyzes the ultimate step of the pyrrolysine biosynthesis pathway by converting the isopeptide (3R)-3-methyl-D-ornithyl-N(6)-L-lysine to the 22nd proteinogenic amino acid. Is able to use surrogate substrates such as (3R)-D-ornithyl-N(6)-L-lysine in vitro. This chain is Pyrrolysine synthase, found in Methanosarcina barkeri (strain Fusaro / DSM 804).